A 429-amino-acid polypeptide reads, in one-letter code: Histidinol dehydrogenase (429 aa).

Tyr-127, Gln-188, and Asn-211 together coordinate NAD(+). Substrate contacts are provided by Ser-234, Gln-256, and His-259. Zn(2+) is bound by residues Gln-256 and His-259. Residues Glu-324 and His-325 each act as proton acceptor in the active site. Residues His-325, Asp-358, Glu-412, and His-417 each contribute to the substrate site. Asp-358 provides a ligand contact to Zn(2+). His-417 is a Zn(2+) binding site.

This sequence belongs to the histidinol dehydrogenase family. Zn(2+) serves as cofactor.

It catalyses the reaction L-histidinol + 2 NAD(+) + H2O = L-histidine + 2 NADH + 3 H(+). Its pathway is amino-acid biosynthesis; L-histidine biosynthesis; L-histidine from 5-phospho-alpha-D-ribose 1-diphosphate: step 9/9. Catalyzes the sequential NAD-dependent oxidations of L-histidinol to L-histidinaldehyde and then to L-histidine. This is Histidinol dehydrogenase from Bacillus cereus (strain ATCC 14579 / DSM 31 / CCUG 7414 / JCM 2152 / NBRC 15305 / NCIMB 9373 / NCTC 2599 / NRRL B-3711).